A 407-amino-acid chain; its full sequence is uncharacterized protein (407 aa).

The next 11 membrane-spanning stretches (helical) occupy residues 13–30 (IVFT…SPFL), 40–62 (VTPL…YYVL), 67–89 (ILGM…YNII), 118–140 (LAFA…VFSG), 147–169 (VYER…IRRL), 179–199 (AVGL…YYNY), 253–271 (WISG…SVFV), 281–303 (TEII…FGPL), 334–356 (GYLI…EIIA), 361–378 (AFAF…LVSF), and 385–402 (QFLV…IVLF).

Its subcellular location is the cell membrane. This is an uncharacterized protein from Aquifex aeolicus (strain VF5).